Reading from the N-terminus, the 154-residue chain is Ribonuclease HI (154 aa).

The RNase H type-1 domain occupies 1 to 142 (MTKHVEIFTD…CDELARTAAE (142 aa)). Positions 10, 48, 70, and 134 each coordinate Mg(2+).

Belongs to the RNase H family. As to quaternary structure, monomer. Mg(2+) serves as cofactor.

Its subcellular location is the cytoplasm. It carries out the reaction Endonucleolytic cleavage to 5'-phosphomonoester.. In terms of biological role, endonuclease that specifically degrades the RNA of RNA-DNA hybrids. This chain is Ribonuclease HI, found in Vibrio parahaemolyticus serotype O3:K6 (strain RIMD 2210633).